A 206-amino-acid chain; its full sequence is Orotate phosphoribosyltransferase (206 aa).

5-phospho-alpha-D-ribose 1-diphosphate is bound by residues Lys26, 72–73, Arg99, Lys100, Lys103, His105, and 124–132; these read YK and DDVMTSGFS. Residues Thr128 and Arg157 each contribute to the orotate site.

The protein belongs to the purine/pyrimidine phosphoribosyltransferase family. PyrE subfamily. As to quaternary structure, homodimer. Requires Mg(2+) as cofactor.

It carries out the reaction orotidine 5'-phosphate + diphosphate = orotate + 5-phospho-alpha-D-ribose 1-diphosphate. The protein operates within pyrimidine metabolism; UMP biosynthesis via de novo pathway; UMP from orotate: step 1/2. Functionally, catalyzes the transfer of a ribosyl phosphate group from 5-phosphoribose 1-diphosphate to orotate, leading to the formation of orotidine monophosphate (OMP). This is Orotate phosphoribosyltransferase from Buchnera aphidicola subsp. Baizongia pistaciae (strain Bp).